Reading from the N-terminus, the 75-residue chain is Cytochrome c oxidase subunit 6C (75 aa).

The Mitochondrial matrix portion of the chain corresponds to 1–13; the sequence is MAPEVLPKPQMRG. Residues 14 to 54 traverse the membrane as a helical segment; the sequence is LLAKRLRFHMVTAFVLSLGVAALYKFRVADKRKKAYADFYR. Residues 55 to 75 lie on the Mitochondrial intermembrane side of the membrane; the sequence is NYDAMKDFEEMRKAGIFQSVK.

It belongs to the cytochrome c oxidase subunit 6c family. As to quaternary structure, component of the cytochrome c oxidase (complex IV, CIV), a multisubunit enzyme composed of 14 subunits. The complex is composed of a catalytic core of 3 subunits MT-CO1, MT-CO2 and MT-CO3, encoded in the mitochondrial DNA, and 11 supernumerary subunits COX4I, COX5A, COX5B, COX6A, COX6B, COX6C, COX7A, COX7B, COX7C, COX8 and NDUFA4, which are encoded in the nuclear genome. The complex exists as a monomer or a dimer and forms supercomplexes (SCs) in the inner mitochondrial membrane with NADH-ubiquinone oxidoreductase (complex I, CI) and ubiquinol-cytochrome c oxidoreductase (cytochrome b-c1 complex, complex III, CIII), resulting in different assemblies (supercomplex SCI(1)III(2)IV(1) and megacomplex MCI(2)III(2)IV(2)).

Its subcellular location is the mitochondrion inner membrane. The protein operates within energy metabolism; oxidative phosphorylation. Functionally, component of the cytochrome c oxidase, the last enzyme in the mitochondrial electron transport chain which drives oxidative phosphorylation. The respiratory chain contains 3 multisubunit complexes succinate dehydrogenase (complex II, CII), ubiquinol-cytochrome c oxidoreductase (cytochrome b-c1 complex, complex III, CIII) and cytochrome c oxidase (complex IV, CIV), that cooperate to transfer electrons derived from NADH and succinate to molecular oxygen, creating an electrochemical gradient over the inner membrane that drives transmembrane transport and the ATP synthase. Cytochrome c oxidase is the component of the respiratory chain that catalyzes the reduction of oxygen to water. Electrons originating from reduced cytochrome c in the intermembrane space (IMS) are transferred via the dinuclear copper A center (CU(A)) of subunit 2 and heme A of subunit 1 to the active site in subunit 1, a binuclear center (BNC) formed by heme A3 and copper B (CU(B)). The BNC reduces molecular oxygen to 2 water molecules using 4 electrons from cytochrome c in the IMS and 4 protons from the mitochondrial matrix. The protein is Cytochrome c oxidase subunit 6C (COX6C) of Trachypithecus cristatus (Silvered leaf-monkey).